Consider the following 513-residue polypeptide: RNA-splicing ligase RtcB homolog (513 aa).

Mn(2+) is bound by residues aspartate 127, cysteine 130, histidine 235, histidine 267, and histidine 361. 234 to 238 (NHYAE) is a binding site for GMP. Residues 361 to 362 (HN), 410 to 413 (GGTM), serine 417, 436 to 439 (HGAG), and lysine 512 each bind GMP. Histidine 436 serves as the catalytic GMP-histidine intermediate.

It belongs to the RtcB family. In terms of assembly, catalytic component of the tRNA-splicing ligase complex. Requires Mn(2+) as cofactor.

The catalysed reaction is a 3'-end 3'-phospho-ribonucleotide-RNA + a 5'-end dephospho-ribonucleoside-RNA + GTP = a ribonucleotidyl-ribonucleotide-RNA + GMP + diphosphate. The enzyme catalyses a 3'-end 2',3'-cyclophospho-ribonucleotide-RNA + a 5'-end dephospho-ribonucleoside-RNA + GTP + H2O = a ribonucleotidyl-ribonucleotide-RNA + GMP + diphosphate + H(+). Its function is as follows. Catalytic subunit of the tRNA-splicing ligase complex that acts by directly joining spliced tRNA halves to mature-sized tRNAs by incorporating the precursor-derived splice junction phosphate into the mature tRNA as a canonical 3',5'-phosphodiester. May act as an RNA ligase with broad substrate specificity, and may function toward other RNAs. This chain is RNA-splicing ligase RtcB homolog, found in Micromonas commoda (strain RCC299 / NOUM17 / CCMP2709) (Picoplanktonic green alga).